A 488-amino-acid polypeptide reads, in one-letter code: Ribulose bisphosphate carboxylase large chain (488 aa).

Substrate-binding residues include Asn-127 and Thr-177. Residue Lys-179 is the Proton acceptor of the active site. Lys-181 is a substrate binding site. Residues Lys-205, Asp-207, and Glu-208 each contribute to the Mg(2+) site. Lys-205 carries the N6-carboxylysine modification. His-297 acts as the Proton acceptor in catalysis. 3 residues coordinate substrate: Arg-298, His-330, and Ser-382.

This sequence belongs to the RuBisCO large chain family. Type I subfamily. Heterohexadecamer of 8 large chains and 8 small chains. It depends on Mg(2+) as a cofactor.

Its subcellular location is the plastid. It localises to the chloroplast. The catalysed reaction is 2 (2R)-3-phosphoglycerate + 2 H(+) = D-ribulose 1,5-bisphosphate + CO2 + H2O. It catalyses the reaction D-ribulose 1,5-bisphosphate + O2 = 2-phosphoglycolate + (2R)-3-phosphoglycerate + 2 H(+). RuBisCO catalyzes two reactions: the carboxylation of D-ribulose 1,5-bisphosphate, the primary event in carbon dioxide fixation, as well as the oxidative fragmentation of the pentose substrate in the photorespiration process. Both reactions occur simultaneously and in competition at the same active site. This Porphyra umbilicalis (Purple laver) protein is Ribulose bisphosphate carboxylase large chain (rbcL).